We begin with the raw amino-acid sequence, 156 residues long: MIICSVDIGIKNPAYAIFNYDNTSNTIKLIAIEKSDWTKNWERSVARDLTRYNPDVVILEKQGFKSPNSKIIYFIKGFFYNSNTKVIVRNPTFKGGSYRNRKKQSIDVFIQKISEYTDYKNDILNKYTKLDDIADSFNLGLSYMESLLKKCKISKD.

The protein belongs to the RuvC family. Poxviruses-type subfamily. The cofactor is Mg(2+).

Functionally, nuclease that specifically cleaves and resolves four-way DNA Holliday junctions into linear duplex products. This Vertebrata (FPV) protein is Holliday junction resolvase.